Here is a 389-residue protein sequence, read N- to C-terminus: Altered inheritance of mitochondria protein 6 (389 aa).

The first 23 residues, 1-23, serve as a signal peptide directing secretion; the sequence is MMLLSQPGIWLLVSLFLCSSVNS.

The protein belongs to the AIM6 family.

The chain is Altered inheritance of mitochondria protein 6 (AIM6) from Eremothecium gossypii (strain ATCC 10895 / CBS 109.51 / FGSC 9923 / NRRL Y-1056) (Yeast).